We begin with the raw amino-acid sequence, 132 residues long: uncharacterized protein (132 aa).

3 helical membrane-spanning segments follow: residues leucine 28–proline 48, isoleucine 59–tyrosine 79, and leucine 106–isoleucine 126.

The protein localises to the membrane. This is an uncharacterized protein from Schizosaccharomyces pombe (strain 972 / ATCC 24843) (Fission yeast).